A 533-amino-acid polypeptide reads, in one-letter code: DELLA protein GAI (533 aa).

Basic residues predominate over residues 1–12 (MKRDHHHHHHQD). The disordered stretch occupies residues 1 to 24 (MKRDHHHHHHQDKKTMMMNEEDDG). A DELLA motif motif is present at residues 28–32 (DELLA). The short motif at 50 to 54 (LEQLE) is the LEXLE motif element. A VHYNP motif motif is present at residues 73-77 (VHYNP). The GRAS domain occupies 160 to 529 (VDSQENGVRL…RPLIATSAWK (370 aa)). Positions 167-221 (VRLVHALLACAEAVQKENLTVAEALVKQIGFLAVSQIGAMRKVATYFAEALARRI) are leucine repeat I (LRI). The LxCxE motif signature appears at 174 to 178 (LACAE). A VHIID region spans residues 240–305 (QMHFYETCPY…GGPPVFRLTG (66 aa)). Positions 271-275 (VHVID) match the VHIID motif. The tract at residues 319-351 (EVGCKLAHLAEAIHVEFEYRGFVANTLADLDAS) is leucine repeat II (LRII). Residues 363-450 (VAVNSVFELH…EVYLGKQICN (88 aa)) form a PFYRE region. The short motif at 371 to 375 (LHKLL) is the LXXLL motif element. An SAW region spans residues 453–529 (ACDGPDRVER…RPLIATSAWK (77 aa)).

This sequence belongs to the GRAS family. DELLA subfamily. Interacts directly with the GID2/SLY1 component of the SCF(GID2) complex. Interacts (via N-terminus) with GID1A, GID1B and GID1B (via N-terminus). Interacts with the BOI proteins BOI, BRG1, BRG2, BRG3 and NUP58. Interacts with TOPP4. Interacts with TCP14 and TCP15. Interacts with FLZ5. Binds to and coactivates GAF1/IDD2 and ENY/IDD1 at the promoter of GA20OX2 gene. Binds to PDF2 and ATML1. Interacts with the prefoldin alpha subunits PFD3 and PFD5 in the nucleus. Phosphorylated. In terms of processing, gibberellin (GA) induces dephosphorylation of GAI by TOPP4 and subsequent degradation by the proteasomal pathway. Post-translationally, may be ubiquitinated, as suggested by its interaction with GID2. Ubiquitination is however unsure since in contrast to other DELLA proteins, it is not ubiquitinated and degraded upon GA application. Nevertheless, ubiquitination may be triggered by other processes. Ubiquitously expressed. Expressed in rosette leaves, roots, stems and inflorescences of greenhouse grown.

The protein resides in the nucleus. Transcription activation is repressed by gibberellic acid GA(3) in the presence of TPR4. Transcriptional regulator that acts as a repressor of the gibberellin (GA) signaling pathway. Transcription coactivator of the zinc finger transcription factors GAF1/IDD2 and ENY/IDD1 in regulation of gibberellin homeostasis and signaling. No effect of the BOI proteins on its stability. Probably acts by participating in large multiprotein complexes that repress transcription of GA-inducible genes. Positively regulates XERICO expression. In contrast to RGA, it is less sensitive to GA. Its activity is probably regulated by other phytohormones such as auxin and ethylene. Involved in the regulation of seed dormancy and germination, including glucose-induced delay of seed germination. Involved in the process leading to microtubules (MTs) dissociation in response to gibberellic acid (GA) probably by mediating the translocation of the prefoldin co-chaperone complex from the cytoplasm to the nucleus. The polypeptide is DELLA protein GAI (Arabidopsis thaliana (Mouse-ear cress)).